Reading from the N-terminus, the 485-residue chain is MALASLPKVVMGSVAFGVFWMLAVFPSVPFLPIGRTAGALLGAVLMIVFHVISADDAYASIDLPILGLLFATMVVGGYLKNAGMFRHLGRLLAWRSQGGRDLMCRVCVVTALASALFTNDTCCVVLTEFVLELAAERNLPAKPFLLALATSANIGSSATPIGNPQNLVIAFNSKISFISFLLGILPAMLAGMGINMLMLLCMYWKELDGGACSPDEVAAGKQMEAIEEGRRTALNNNKKDDGDAATPASPEDDDGGDAESMMSENISTKHRWFMQCSEHRRKLFLKSFAYVVTVGMLVAYMLGLNMSWTAITTAIALVVVDFRDAEPCLDKVSYSLLVFFSGMFVTVSGFNKTGLPGAIWNVMAPYSKINHVTGVTVLSVIILLLSNLASNVPTVLLMGDEVAAAAATISPAAVTRSWLLLAWVSTVAGNLSLLGSAANLIVCEQARRATRNAYDLTFWNHVIFGLPSTLVVTAIGIPLIGKINI.

5 helical membrane passes run 14–34 (VAFGVFWMLAVFPSVPFLPIG), 37–57 (AGALLGAVLMIVFHVISADDA), 59–79 (ASIDLPILGLLFATMVVGGYL), 106–126 (VCVVTALASALFTNDTCCVVL), and 180–200 (FLLGILPAMLAGMGINMLMLL). Basic and acidic residues predominate over residues 233-242 (ALNNNKKDDG). Residues 233–261 (ALNNNKKDDGDAATPASPEDDDGGDAESM) form a disordered region. Helical transmembrane passes span 283–303 (LFLKSFAYVVTVGMLVAYMLG), 336–356 (LLVFFSGMFVTVSGFNKTGLP), 377–397 (VLSVIILLLSNLASNVPTVLL), 418–438 (WLLLAWVSTVAGNLSLLGSAA), and 461–481 (HVIFGLPSTLVVTAIGIPLIG).

Belongs to the arsenite-antimonite (ArsB) efflux (TC 2.A.45) family.

It localises to the cell membrane. Functionally, silicon efflux transporter involved in silicon transport in shoots. In the nodes, involved with LSI2 and NIP2-2/LSI6 in silicon intervascular transfer, which is required for the preferential distribution of silicon, such as hyperaccumulation of silicon in the husk. Silicon is beneficial to plant growth and helps plants to overcome abiotic and biotic stresses by preventing lodging (falling over) and increasing resistance to pests and diseases, as well as other stresses. This Oryza sativa subsp. japonica (Rice) protein is Silicon efflux transporter LSI3.